Here is a 435-residue protein sequence, read N- to C-terminus: Glutamate-1-semialdehyde 2,1-aminomutase (435 aa).

The residue at position 270 (lysine 270) is an N6-(pyridoxal phosphate)lysine.

Belongs to the class-III pyridoxal-phosphate-dependent aminotransferase family. HemL subfamily. Homodimer. Pyridoxal 5'-phosphate is required as a cofactor.

It localises to the cytoplasm. It carries out the reaction (S)-4-amino-5-oxopentanoate = 5-aminolevulinate. It functions in the pathway porphyrin-containing compound metabolism; protoporphyrin-IX biosynthesis; 5-aminolevulinate from L-glutamyl-tRNA(Glu): step 2/2. In Wigglesworthia glossinidia brevipalpis, this protein is Glutamate-1-semialdehyde 2,1-aminomutase.